The following is a 98-amino-acid chain: Tax1-binding protein 3 (98 aa).

Serine 2 bears the N-acetylserine mark. One can recognise a PDZ domain in the interval 12–87 (VVQRVEIHKL…VVRLLVTRQS (76 aa)).

Interacts (via its PDZ domain) with GLS2. Interacts (via its PDZ domain) with RTKN (via the C-terminal region); this interaction facilitates Rho-mediated activation of the FOS serum response element (SRE). Interacts (via PDZ domain) with ARHGEF16. Interacts (via PDZ domain) with KCNJ4 (via C-terminus). Competes with LIN7A for KCNJ4 binding. Interacts (via its PDZ domain) with CTNNB1; this interaction inhibits the transcriptional activity of CTNNB1. Interacts with ADGRB2. In terms of tissue distribution, detected in kidney distal convoluted tubules (at protein level).

It is found in the cytoplasm. The protein resides in the nucleus. It localises to the cell membrane. In terms of biological role, may regulate a number of protein-protein interactions by competing for PDZ domain binding sites. Binds CTNNB1 and may thereby act as an inhibitor of the Wnt signaling pathway. Competes with LIN7A for KCNJ4 binding, and thereby promotes KCNJ4 internalization. May play a role in the Rho signaling pathway. This is Tax1-binding protein 3 from Rattus norvegicus (Rat).